We begin with the raw amino-acid sequence, 621 residues long: Proton pump-interactor BIP131 (621 aa).

Residues 250-305 (IDEVKRDRQAVRDKIKVLEDQIHAVDGEIAALQDDLTAATARKDKAFEALNELRKT) are a coiled coil. Over residues 374 to 387 (SRDGRMRNPDEKPI) the composition is skewed to basic and acidic residues. Residues 374 to 572 (SRDGRMRNPD…RSTVTKTKTP (199 aa)) form a disordered region. The segment covering 430–441 (KAPAKAAKAKQP) has biased composition (low complexity). The segment covering 448-516 (PDVHDDEPPK…AEKKLKEKEK (69 aa)) has biased composition (basic and acidic residues). Positions 466 to 524 (EAKLKEMKRQEEIEKNKLALERKKKQAEKQAMKAAARAEKEAEKKLKEKEKKARKRSAT) form a coiled coil. The chain crosses the membrane as a helical span at residues 589–609 (WGAPMAALAAALVALLGALVY).

Belongs to the plant proton pump-interactor protein family. As to quaternary structure, interacts with BRI1.

Its subcellular location is the cell membrane. Its function is as follows. May regulate plasma membrane ATPase activity. This chain is Proton pump-interactor BIP131, found in Oryza sativa subsp. japonica (Rice).